The chain runs to 509 residues: MEIRAAEISKVIKDQIASFGTEAQVSEVGSVLSVGDGIARIHGLDKVQAGEMVEFSNGVKGMALNLEADNVGVVIFGSDSEIKEGDVVKRTGTIVDVPVGKGLLGRVVDALGNPIDGKGPIVDATRQRVEVKAPGIIPRKSVHEPVQTGLKAIDALVPVGRGQRELIIGDRQTGKTAVAIDTFINQKAVNAGTDEGKKLYCIYVAVGQKRSTVAQIVRQLEENGAMEYSIVVAATASEPAPLQYLAPYTGATMGEFFRDNGMHAVIVYDDLSKQAVAYRQMSLLLRRPPGREAYPGDVFYLHSRLLERAAKMNDENGAGSLTALPIIETQAGDVSAYIPTNVISITDGQIFLETGLFYQGIRPAINVGLSVSRVGSSAQTKAMKKVAGSIKLELAQYREMAAFAQFGSDLDASTQKLLNRGARLTELLKQPQFSPLGFEEQTCVIFAGTQGYLDAVPVNRVTEYEAELLSFLRSQHADLLGLIRDTKDLGDEAKGKLVAALDAFAKQFA.

169 to 176 (GDRQTGKT) contributes to the ATP binding site.

The protein belongs to the ATPase alpha/beta chains family. In terms of assembly, F-type ATPases have 2 components, CF(1) - the catalytic core - and CF(0) - the membrane proton channel. CF(1) has five subunits: alpha(3), beta(3), gamma(1), delta(1), epsilon(1). CF(0) has three main subunits: a(1), b(2) and c(9-12). The alpha and beta chains form an alternating ring which encloses part of the gamma chain. CF(1) is attached to CF(0) by a central stalk formed by the gamma and epsilon chains, while a peripheral stalk is formed by the delta and b chains.

It localises to the cell inner membrane. It carries out the reaction ATP + H2O + 4 H(+)(in) = ADP + phosphate + 5 H(+)(out). In terms of biological role, produces ATP from ADP in the presence of a proton gradient across the membrane. The alpha chain is a regulatory subunit. This chain is ATP synthase subunit alpha, found in Novosphingobium aromaticivorans (strain ATCC 700278 / DSM 12444 / CCUG 56034 / CIP 105152 / NBRC 16084 / F199).